A 145-amino-acid chain; its full sequence is Peptide methionine sulfoxide reductase MsrB (145 aa).

In terms of domain architecture, MsrB spans 6-129 (KNERLQQLTD…NSAALRFIPV (124 aa)). Cysteine 118 serves as the catalytic Nucleophile.

This sequence belongs to the MsrB Met sulfoxide reductase family.

It catalyses the reaction L-methionyl-[protein] + [thioredoxin]-disulfide + H2O = L-methionyl-(R)-S-oxide-[protein] + [thioredoxin]-dithiol. This chain is Peptide methionine sulfoxide reductase MsrB, found in Listeria monocytogenes serovar 1/2a (strain ATCC BAA-679 / EGD-e).